Here is a 348-residue protein sequence, read N- to C-terminus: MAPQPRRLIAPDAREDDAELSLRPLALADFTGQASARANLKVFIEAAKARREALDHVLFWGPPGLGKTTLAQIVARELGVNFRSTSGPVIAKAGDLAAQLTGLEDRDVLFIDEIHRLNPAVEEILYPAMEDFQLDLIIGEGPGARSVKIDLAKFTLIGATTRAGLLTTPLRDRFGIPIRLEYYTVEELECIVRRGARVLSIPIADEGANEIARRARGTPRIAGRLLRRVRDFAAVDGDPEITRAVADRALRLLDVDHIGLDQMDRRFLQTIALSFGGGPVGVETIAAALSEPRDAIEDIIEPYLIQQGFLQRTPRGRMLTSHAFRHLGLAEPPREKTQFQLFSEGGEE.

The tract at residues 1–183 (MAPQPRRLIA…FGIPIRLEYY (183 aa)) is large ATPase domain (RuvB-L). Residues leucine 22, arginine 23, glycine 64, lysine 67, threonine 68, threonine 69, 130–132 (EDF), arginine 173, tyrosine 183, and arginine 220 each bind ATP. Position 68 (threonine 68) interacts with Mg(2+). Residues 184–254 (TVEELECIVR…VADRALRLLD (71 aa)) form a small ATPAse domain (RuvB-S) region. The interval 257–348 (HIGLDQMDRR…FQLFSEGGEE (92 aa)) is head domain (RuvB-H). DNA-binding residues include arginine 293, arginine 312, and arginine 317.

The protein belongs to the RuvB family. Homohexamer. Forms an RuvA(8)-RuvB(12)-Holliday junction (HJ) complex. HJ DNA is sandwiched between 2 RuvA tetramers; dsDNA enters through RuvA and exits via RuvB. An RuvB hexamer assembles on each DNA strand where it exits the tetramer. Each RuvB hexamer is contacted by two RuvA subunits (via domain III) on 2 adjacent RuvB subunits; this complex drives branch migration. In the full resolvosome a probable DNA-RuvA(4)-RuvB(12)-RuvC(2) complex forms which resolves the HJ.

The protein localises to the cytoplasm. The catalysed reaction is ATP + H2O = ADP + phosphate + H(+). Its function is as follows. The RuvA-RuvB-RuvC complex processes Holliday junction (HJ) DNA during genetic recombination and DNA repair, while the RuvA-RuvB complex plays an important role in the rescue of blocked DNA replication forks via replication fork reversal (RFR). RuvA specifically binds to HJ cruciform DNA, conferring on it an open structure. The RuvB hexamer acts as an ATP-dependent pump, pulling dsDNA into and through the RuvAB complex. RuvB forms 2 homohexamers on either side of HJ DNA bound by 1 or 2 RuvA tetramers; 4 subunits per hexamer contact DNA at a time. Coordinated motions by a converter formed by DNA-disengaged RuvB subunits stimulates ATP hydrolysis and nucleotide exchange. Immobilization of the converter enables RuvB to convert the ATP-contained energy into a lever motion, pulling 2 nucleotides of DNA out of the RuvA tetramer per ATP hydrolyzed, thus driving DNA branch migration. The RuvB motors rotate together with the DNA substrate, which together with the progressing nucleotide cycle form the mechanistic basis for DNA recombination by continuous HJ branch migration. Branch migration allows RuvC to scan DNA until it finds its consensus sequence, where it cleaves and resolves cruciform DNA. In Methylocella silvestris (strain DSM 15510 / CIP 108128 / LMG 27833 / NCIMB 13906 / BL2), this protein is Holliday junction branch migration complex subunit RuvB.